Here is a 258-residue protein sequence, read N- to C-terminus: Pyridoxal phosphate homeostasis protein (258 aa).

N6-(pyridoxal phosphate)lysine is present on lysine 47.

This sequence belongs to the pyridoxal phosphate-binding protein YggS/PROSC family.

Pyridoxal 5'-phosphate (PLP)-binding protein, which is involved in PLP homeostasis. The polypeptide is Pyridoxal phosphate homeostasis protein (Mycobacterium bovis (strain ATCC BAA-935 / AF2122/97)).